The primary structure comprises 372 residues: MAFVDEAKFFVKAGDGGNGCVSFRREKFVPKGGPNGGDGGKGGDVIMVASSKVQSLIDFRYRSHFKAERGVHGQGRDMHGRGGKDCYMDIPVGSVVKDSETGRVLADLSEEGEEFVVAQGGSGGMGNPHFSSGSNRTPRVATKGKLGEEKWLLIELKLMADVGLVGLPNAGKSTLLSKLSAANPKVADYPFTTLEPQLGMLHFPMRNSCIIADIPGLVEGAHQGVGLGHKFLRHVERTKILVHVIDASADDPFSDYDIIGNELRSYKEELADRAKILVLNKCDEFDFDKDLLPDFIEARGLEPKNVLFISAITGEGVDKLVKLIGDIIDDMEYQELKQKREEERLQDLKKQKEEERRQELKKQKEEEQAKDE.

The Obg domain occupies 1-159; that stretch reads MAFVDEAKFF…KWLLIELKLM (159 aa). The interval 121–141 is disordered; it reads GSGGMGNPHFSSGSNRTPRVA. In terms of domain architecture, OBG-type G spans 160-329; that stretch reads ADVGLVGLPN…LVKLIGDIID (170 aa). GTP is bound by residues 166–173, 191–195, 213–216, 280–283, and 310–312; these read GLPNAGKS, FTTLE, DIPG, NKCD, and SAI. Positions 173 and 193 each coordinate Mg(2+). The tract at residues 346-372 is disordered; the sequence is QDLKKQKEEERRQELKKQKEEEQAKDE.

The protein belongs to the TRAFAC class OBG-HflX-like GTPase superfamily. OBG GTPase family. As to quaternary structure, monomer. Mg(2+) is required as a cofactor.

The protein resides in the cytoplasm. Its function is as follows. An essential GTPase which binds GTP, GDP and possibly (p)ppGpp with moderate affinity, with high nucleotide exchange rates and a fairly low GTP hydrolysis rate. Plays a role in control of the cell cycle, stress response, ribosome biogenesis and in those bacteria that undergo differentiation, in morphogenesis control. In Desulfotalea psychrophila (strain LSv54 / DSM 12343), this protein is GTPase Obg.